The chain runs to 357 residues: MTTLKNDRFLRALLREPVDTTPIWMMRQAGRYLPEYRETRSKAGDFLSLCKNTEFACEVTLQPLRRYDLDAAILFSDILTIPDALGLGLYFETGEGPKFHKTVRTEQDVANLPKLNAKADLDYVMNAVSTIRSALGGQVPLIGFSGSPWTLATYMVEGGSSKEFRFTKQMMYAQPEVLHALLDHLADSVIDYLNAQIDAGAQAIQIFDSWGGALAHREYVEFSLNYMKKIIAGLQREKDGRRIPVIVFTKGGGQWLEPMITTGADALGLDWTTPLNTARNVVSGRVALQGNLDPAVLYGSAASIEKAVKAMLDDAYANGEKTGYVANLGHGITQWVDPAQPKIFVDTVHEYSAKYLG.

Substrate-binding positions include 27–31 (RQAGR), D77, Y154, S209, and H330.

The protein belongs to the uroporphyrinogen decarboxylase family. Homodimer.

The protein resides in the cytoplasm. It carries out the reaction uroporphyrinogen III + 4 H(+) = coproporphyrinogen III + 4 CO2. The protein operates within porphyrin-containing compound metabolism; protoporphyrin-IX biosynthesis; coproporphyrinogen-III from 5-aminolevulinate: step 4/4. Functionally, catalyzes the decarboxylation of four acetate groups of uroporphyrinogen-III to yield coproporphyrinogen-III. In Acinetobacter baumannii (strain ATCC 17978 / DSM 105126 / CIP 53.77 / LMG 1025 / NCDC KC755 / 5377), this protein is Uroporphyrinogen decarboxylase.